Consider the following 456-residue polypeptide: UDP-N-acetylmuramate--L-alanine ligase (456 aa).

An ATP-binding site is contributed by 112 to 118 (GAHGKTT).

The protein belongs to the MurCDEF family.

It is found in the cytoplasm. It catalyses the reaction UDP-N-acetyl-alpha-D-muramate + L-alanine + ATP = UDP-N-acetyl-alpha-D-muramoyl-L-alanine + ADP + phosphate + H(+). It participates in cell wall biogenesis; peptidoglycan biosynthesis. In terms of biological role, cell wall formation. This is UDP-N-acetylmuramate--L-alanine ligase from Desulfatibacillum aliphaticivorans.